A 776-amino-acid chain; its full sequence is Cilium assembly protein DZIP1L (776 aa).

The C2H2-type zinc finger occupies 166-189 (HTCHLCDKTFMNATFLRGHIQRRH). Residues 196-450 (GKQKQEQQLG…RKVLAALRNN (255 aa)) are a coiled coil. A phosphoserine mark is found at S425 and S426. The segment at 520-776 (SRAKKRWEGT…SGSRPRIPGW (257 aa)) is disordered. Over residues 600 to 618 (GPSSTPVSPGPGLSTPPFS) the composition is skewed to low complexity. Positions 652–683 (WSDSETSEESAQSPGKGSDGLASSATLVQSMV) are enriched in polar residues. A compositionally biased stretch (basic and acidic residues) spans 685 to 694 (NLEKQLETPA). Residues 709–721 (TALQRSSTPARKT) show a composition bias toward polar residues.

This sequence belongs to the DZIP C2H2-type zinc-finger protein family. Interacts with SEPTIN2.

The protein resides in the cytoplasm. Its subcellular location is the cytoskeleton. It localises to the cilium basal body. The protein localises to the microtubule organizing center. It is found in the centrosome. The protein resides in the centriole. Its function is as follows. Involved in primary cilium formation. Probably acts as a transition zone protein required for localization of PKD1/PC1 and PKD2/PC2 to the ciliary membrane. The chain is Cilium assembly protein DZIP1L from Rattus norvegicus (Rat).